The chain runs to 295 residues: Nucleotide-binding protein PEPE_0450 (295 aa).

ATP is bound at residue 12-19; sequence GMSGAGKT. Position 62–65 (62–65) interacts with GTP; that stretch reads DLRS.

Belongs to the RapZ-like family.

Its function is as follows. Displays ATPase and GTPase activities. The sequence is that of Nucleotide-binding protein PEPE_0450 from Pediococcus pentosaceus (strain ATCC 25745 / CCUG 21536 / LMG 10740 / 183-1w).